The sequence spans 266 residues: Undecaprenyl-diphosphatase (266 aa).

The next 8 membrane-spanning stretches (helical) occupy residues methionine 1–isoleucine 21, glutamine 39–phenylalanine 59, tryptophan 87–isoleucine 107, isoleucine 114–leucine 134, valine 144–threonine 164, alanine 184–valine 204, alanine 218–leucine 238, and methionine 246–alanine 266.

It belongs to the UppP family.

It localises to the cell inner membrane. It carries out the reaction di-trans,octa-cis-undecaprenyl diphosphate + H2O = di-trans,octa-cis-undecaprenyl phosphate + phosphate + H(+). Functionally, catalyzes the dephosphorylation of undecaprenyl diphosphate (UPP). Confers resistance to bacitracin. This Shewanella loihica (strain ATCC BAA-1088 / PV-4) protein is Undecaprenyl-diphosphatase.